Here is a 391-residue protein sequence, read N- to C-terminus: DDGGALHAPGSVIQKENNKNDKKILELMSNIIQLLTGEVAIRTHHVSIYFSLDEWDYITGNKDLYEEGMKEEPQQLHPLAACEYKDESNVAAHTEATLCCNNDGNFTEMSPVEQPPPANGIKEEVASWEGGNQSDCSINKCTEQIQGTDTPTPIMGYRMNNSLLENYISNAIKEETASCEEINQSNCSINPLTEQIQGTDTPTPIMGYSLFRIPCNKSDESADTSPHKSRITKKTLHKKNSCVVSHKITPIGEKPVSTSGCGKYFMKSSELSVHPRTHTGEKPFPCSECGKCFINQSTLARHYRTHTGEKPYPCSECGKCFASSTYLRDHRRIHTGEKLSSCSECGKYFLNCWSLARHHRTHTGEKPYSCSECGKSFAISSDLAGHRRRTH.

C2H2-type zinc fingers lie at residues Phe284–His306, Tyr312–His334, Ser340–His362, and Tyr368–His391.

It belongs to the krueppel C2H2-type zinc-finger protein family.

It is found in the nucleus. May be involved in transcriptional regulation. This chain is Oocyte zinc finger protein XlCOF7.2, found in Xenopus laevis (African clawed frog).